The following is a 501-amino-acid chain: Cytochrome P450 81F4 (501 aa).

Residue Lys245 forms a Glycyl lysine isopeptide (Lys-Gly) (interchain with G-Cter in ubiquitin) linkage. Residues 285–305 (IIIKGLMLGIMVASSETSALT) traverse the membrane as a helical segment. Cys435 lines the heme pocket.

Belongs to the cytochrome P450 family. Requires heme as cofactor.

Its subcellular location is the membrane. It participates in secondary metabolite biosynthesis. Its function is as follows. Involved in indole glucosinolate biosynthesis. Catalyzes hydroxylation reactions of the glucosinolate indole ring. Converts indol-3-yl-methylglucosinolate (I3M) to 1-hydroxy-indol-3-yl-methylglucosinolate (1OH-I3M) intermediate. This hydroxy intermediates is converted to 1-methoxy-indol-3-yl-methylglucosinolate (1MO-I3M) by indole glucosinolate methyltransferase 1 and 2 (IGMT1 and IGMT2). This is Cytochrome P450 81F4 from Arabidopsis thaliana (Mouse-ear cress).